Here is a 320-residue protein sequence, read N- to C-terminus: MNAPFVVSPVRHDWSRHEIKALYDLPLLELIARASQIHALYHDPNDLQKASLLSIKTGGCSEDCGYCSQSARRDEVHLDRVEMMSPSDVLAVAAQARDNGADRFCMGAAWRQVRDGAAFDAVLEMVEGVRALGMEACVTLGMLNQSQAQRLKQAGLTAYNHNLDTSPEFYPQIVTTHTYDERLATLEAVRGEGIALCCGGIIGMGETVEDRVALLAILAGFDPHPESVPINALVPVAGTPLGDRQKLDPLEIVRMIATARLVMPDSRIRLSAGRSSLSREAQILCMVAGANSIFSGNVLLTTPNASLDADEALMEALAPR.

The 230-residue stretch at Asn-45 to Arg-274 folds into the Radical SAM core domain. Cys-60, Cys-64, and Cys-67 together coordinate [4Fe-4S] cluster. [2Fe-2S] cluster-binding residues include Cys-105, Cys-137, Cys-197, and Arg-269.

Belongs to the radical SAM superfamily. Biotin synthase family. Homodimer. It depends on [4Fe-4S] cluster as a cofactor. [2Fe-2S] cluster is required as a cofactor.

The enzyme catalyses (4R,5S)-dethiobiotin + (sulfur carrier)-SH + 2 reduced [2Fe-2S]-[ferredoxin] + 2 S-adenosyl-L-methionine = (sulfur carrier)-H + biotin + 2 5'-deoxyadenosine + 2 L-methionine + 2 oxidized [2Fe-2S]-[ferredoxin]. It participates in cofactor biosynthesis; biotin biosynthesis; biotin from 7,8-diaminononanoate: step 2/2. In terms of biological role, catalyzes the conversion of dethiobiotin (DTB) to biotin by the insertion of a sulfur atom into dethiobiotin via a radical-based mechanism. This is Biotin synthase from Beijerinckia indica subsp. indica (strain ATCC 9039 / DSM 1715 / NCIMB 8712).